The sequence spans 127 residues: Modulator protein MzrA (127 aa).

Residues 1–9 lie on the Cytoplasmic side of the membrane; the sequence is MQLPRVTLR. The helical transmembrane segment at 10-32 threads the bilayer; the sequence is QMTWTTSAIVLLGITLLLWSAFR. At 33 to 127 the chain is on the periplasmic side; sequence HQESTLAIRA…LLRDTSHRFG (95 aa).

It belongs to the MzrA family. As to quaternary structure, interacts with EnvZ.

The protein localises to the cell inner membrane. Its function is as follows. Modulates the activity of the EnvZ/OmpR two-component regulatory system, probably by directly modulating EnvZ enzymatic activity and increasing stability of phosphorylated OmpR. In Escherichia fergusonii (strain ATCC 35469 / DSM 13698 / CCUG 18766 / IAM 14443 / JCM 21226 / LMG 7866 / NBRC 102419 / NCTC 12128 / CDC 0568-73), this protein is Modulator protein MzrA.